The sequence spans 195 residues: Peptidyl-tRNA hydrolase (195 aa).

TRNA is bound at residue Y17. H22 (proton acceptor) is an active-site residue. 3 residues coordinate tRNA: F68, N70, and N116.

Belongs to the PTH family. Monomer.

The protein localises to the cytoplasm. It carries out the reaction an N-acyl-L-alpha-aminoacyl-tRNA + H2O = an N-acyl-L-amino acid + a tRNA + H(+). Its function is as follows. Hydrolyzes ribosome-free peptidyl-tRNAs (with 1 or more amino acids incorporated), which drop off the ribosome during protein synthesis, or as a result of ribosome stalling. In terms of biological role, catalyzes the release of premature peptidyl moieties from peptidyl-tRNA molecules trapped in stalled 50S ribosomal subunits, and thus maintains levels of free tRNAs and 50S ribosomes. In Erwinia tasmaniensis (strain DSM 17950 / CFBP 7177 / CIP 109463 / NCPPB 4357 / Et1/99), this protein is Peptidyl-tRNA hydrolase.